The following is a 312-amino-acid chain: Glycine--tRNA ligase alpha subunit (312 aa).

The protein belongs to the class-II aminoacyl-tRNA synthetase family. In terms of assembly, tetramer of two alpha and two beta subunits.

The protein resides in the cytoplasm. It catalyses the reaction tRNA(Gly) + glycine + ATP = glycyl-tRNA(Gly) + AMP + diphosphate. The protein is Glycine--tRNA ligase alpha subunit of Methylobacillus flagellatus (strain ATCC 51484 / DSM 6875 / VKM B-1610 / KT).